The following is a 206-amino-acid chain: Small ribosomal subunit protein uS4 (206 aa).

One can recognise an S4 RNA-binding domain in the interval 96–156 (CRLDNVVYRM…EKSSNQLRIV (61 aa)).

Belongs to the universal ribosomal protein uS4 family. Part of the 30S ribosomal subunit. Contacts protein S5. The interaction surface between S4 and S5 is involved in control of translational fidelity.

Functionally, one of the primary rRNA binding proteins, it binds directly to 16S rRNA where it nucleates assembly of the body of the 30S subunit. With S5 and S12 plays an important role in translational accuracy. This chain is Small ribosomal subunit protein uS4, found in Pseudomonas putida (strain W619).